Reading from the N-terminus, the 94-residue chain is Co-chaperonin GroES (94 aa).

The protein belongs to the GroES chaperonin family. In terms of assembly, heptamer of 7 subunits arranged in a ring. Interacts with the chaperonin GroEL.

It localises to the cytoplasm. Functionally, together with the chaperonin GroEL, plays an essential role in assisting protein folding. The GroEL-GroES system forms a nano-cage that allows encapsulation of the non-native substrate proteins and provides a physical environment optimized to promote and accelerate protein folding. GroES binds to the apical surface of the GroEL ring, thereby capping the opening of the GroEL channel. The polypeptide is Co-chaperonin GroES (Bacillus cereus (strain ZK / E33L)).